The chain runs to 53 residues: UPF0391 membrane protein GFO_1615 (53 aa).

The next 2 helical transmembrane spans lie at 4-24 (LIVIFLIIAIIAAIFGFGGVA) and 27-47 (AADIAKIIFYIFLVLLVISVL).

The protein belongs to the UPF0391 family.

It is found in the cell membrane. The polypeptide is UPF0391 membrane protein GFO_1615 (Christiangramia forsetii (strain DSM 17595 / CGMCC 1.15422 / KT0803) (Gramella forsetii)).